A 303-amino-acid chain; its full sequence is Porphobilinogen deaminase (303 aa).

Cysteine 241 bears the S-(dipyrrolylmethanemethyl)cysteine mark.

The protein belongs to the HMBS family. Monomer. Requires dipyrromethane as cofactor.

The catalysed reaction is 4 porphobilinogen + H2O = hydroxymethylbilane + 4 NH4(+). It functions in the pathway porphyrin-containing compound metabolism; protoporphyrin-IX biosynthesis; coproporphyrinogen-III from 5-aminolevulinate: step 2/4. Its pathway is porphyrin-containing compound metabolism; chlorophyll biosynthesis. In terms of biological role, tetrapolymerization of the monopyrrole PBG into the hydroxymethylbilane pre-uroporphyrinogen in several discrete steps. The chain is Porphobilinogen deaminase from Roseiflexus castenholzii (strain DSM 13941 / HLO8).